A 569-amino-acid chain; its full sequence is Aspartokinase 1, chloroplastic (569 aa).

The transit peptide at 1–90 directs the protein to the chloroplast; that stretch reads MAATRVRCCH…VDEKGITCVM (90 aa). Residues lysine 91, glycine 94, and serine 123 each coordinate ATP. Glutamate 207 lines the substrate pocket. 2 ACT domains span residues 405-483 and 484-560; these read IAST…AIIS and LIGN…GNGS. L-lysine is bound by residues glutamine 413 and glycine 415. Position 430 (serine 430) interacts with S-adenosyl-L-methionine. Residues valine 431, aspartate 432, and serine 437 each coordinate L-lysine. S-adenosyl-L-methionine-binding residues include serine 452 and arginine 453.

The protein belongs to the aspartokinase family. Homodimer.

The protein resides in the plastid. It is found in the chloroplast. It carries out the reaction L-aspartate + ATP = 4-phospho-L-aspartate + ADP. It functions in the pathway amino-acid biosynthesis; L-lysine biosynthesis via DAP pathway; (S)-tetrahydrodipicolinate from L-aspartate: step 1/4. The protein operates within amino-acid biosynthesis; L-methionine biosynthesis via de novo pathway; L-homoserine from L-aspartate: step 1/3. Its pathway is amino-acid biosynthesis; L-threonine biosynthesis; L-threonine from L-aspartate: step 1/5. Inhibited by S-adenosyl-L-methionine (SAM) and lysine in a synergistic manner. No inhibition by threonine, leucine or SAM alone, and no activation or inhibition by alanine, cysteine, isoleucine, serine, valine, methionine, glutamine, asparagine, glutamic acid or arginine. In terms of biological role, involved in the first step of essential amino acids lysine, threonine, methionine and isoleucine synthesis via the aspartate-family pathway. In Arabidopsis thaliana (Mouse-ear cress), this protein is Aspartokinase 1, chloroplastic (AK1).